Here is a 109-residue protein sequence, read N- to C-terminus: Movement protein TGB2 (109 aa).

Residues 1–9 (MPLTPPPDF) lie on the Cytoplasmic side of the membrane. The chain crosses the membrane as a helical span at residues 10–30 (TKVYLSAALGVSLALVVWLLI). Over 31-72 (RSTLPVVGDRDHNLPHGGWYRDGTKSVFYNSPGRLNSIEARK) the chain is Lumenal. Residues 73–93 (APLLGQPWAIVVLLVLLIWAS) traverse the membrane as a helical segment. Residues 94–109 (HKLGRPNCRACAGSHT) lie on the Cytoplasmic side of the membrane.

This sequence belongs to the Tymovirales TGBp2 protein family.

It localises to the host endoplasmic reticulum membrane. Plays a role in viral cell-to-cell propagation, by facilitating genome transport to neighboring plant cells through plasmosdesmata,. This chain is Movement protein TGB2, found in Solanum tuberosum (Potato).